The chain runs to 258 residues: Imidazole glycerol phosphate synthase subunit HisF (258 aa).

Active-site residues include D11 and D130.

The protein belongs to the HisA/HisF family. As to quaternary structure, heterodimer of HisH and HisF.

It localises to the cytoplasm. The catalysed reaction is 5-[(5-phospho-1-deoxy-D-ribulos-1-ylimino)methylamino]-1-(5-phospho-beta-D-ribosyl)imidazole-4-carboxamide + L-glutamine = D-erythro-1-(imidazol-4-yl)glycerol 3-phosphate + 5-amino-1-(5-phospho-beta-D-ribosyl)imidazole-4-carboxamide + L-glutamate + H(+). It functions in the pathway amino-acid biosynthesis; L-histidine biosynthesis; L-histidine from 5-phospho-alpha-D-ribose 1-diphosphate: step 5/9. Functionally, IGPS catalyzes the conversion of PRFAR and glutamine to IGP, AICAR and glutamate. The HisF subunit catalyzes the cyclization activity that produces IGP and AICAR from PRFAR using the ammonia provided by the HisH subunit. The polypeptide is Imidazole glycerol phosphate synthase subunit HisF (Edwardsiella ictaluri (strain 93-146)).